Here is a 130-residue protein sequence, read N- to C-terminus: Large ribosomal subunit protein bL17 (130 aa).

This sequence belongs to the bacterial ribosomal protein bL17 family. As to quaternary structure, part of the 50S ribosomal subunit. Contacts protein L32.

In Paraburkholderia xenovorans (strain LB400), this protein is Large ribosomal subunit protein bL17.